Consider the following 262-residue polypeptide: Deaminated glutathione amidase (262 aa).

The CN hydrolase domain maps to 1 to 238 (MLVAAGQFAV…PALIMAEVTP (238 aa)). Residue glutamate 40 is the Proton acceptor of the active site. Lysine 110 serves as the catalytic Proton donor. The active-site Nucleophile is cysteine 147.

The protein belongs to the carbon-nitrogen hydrolase superfamily. NIT1/NIT2 family.

It carries out the reaction N-(4-oxoglutaryl)-L-cysteinylglycine + H2O = L-cysteinylglycine + 2-oxoglutarate. In terms of biological role, hydrolyzes deaminated glutathione (dGSH) to 2-oxoglutarate and L-cysteinylglycine, and no activity on glutathione or L-glutamine. May function as a metabolite repair enzyme. This is Deaminated glutathione amidase (ybeM) from Escherichia coli O157:H7.